A 140-amino-acid chain; its full sequence is Large ribosomal subunit protein uL11 (140 aa).

The protein belongs to the universal ribosomal protein uL11 family. Part of the ribosomal stalk of the 50S ribosomal subunit. Interacts with L10 and the large rRNA to form the base of the stalk. L10 forms an elongated spine to which L12 dimers bind in a sequential fashion forming a multimeric L10(L12)X complex. Post-translationally, one or more lysine residues are methylated.

Its function is as follows. Forms part of the ribosomal stalk which helps the ribosome interact with GTP-bound translation factors. This is Large ribosomal subunit protein uL11 from Symbiobacterium thermophilum (strain DSM 24528 / JCM 14929 / IAM 14863 / T).